Consider the following 715-residue polypeptide: Palmitoyltransferase ZDHHC5 (715 aa).

The Cytoplasmic segment spans residues 1-13; it reads MPAESGKRFKPSK. Residues 14–34 form a helical membrane-spanning segment; the sequence is YVPVSAAAIFLVGATTLFFAF. At 35–38 the chain is on the extracellular side; the sequence is TCPG. A helical membrane pass occupies residues 39 to 59; it reads LSLYVSPAVPIYNAIMFLFVL. Residues 60–148 are Cytoplasmic-facing; sequence ANFSMATFMD…NCIGRRNYRY (89 aa). Y91 is subject to Phosphotyrosine; by LYN. In terms of domain architecture, DHHC spans 104 to 154; the sequence is KWCATCRFYRPPRCSHCSVCDNCVEEFDHHCPWVNNCIGRRNYRYFFLFLL. C134 (S-palmitoyl cysteine intermediate) is an active-site residue. A helical transmembrane segment spans residues 149–169; that stretch reads FFLFLLSLTAHIMGVFGFGLL. Residues 170-191 are Extracellular-facing; that stretch reads YVLYHIEELSGVRTAVTMAVMC. A helical membrane pass occupies residues 192–212; the sequence is VAGLFFIPVAGLTGFHVVLVA. The Cytoplasmic segment spans residues 213 to 715; it reads RGRTTNEQVT…VGGTTYEISV (503 aa). S247 carries the phosphoserine modification. The segment at 289 to 715 is disordered; sequence GELRRTKSKG…VGGTTYEISV (427 aa). Phosphothreonine is present on T294. 2 positions are modified to phosphoserine: S296 and S299. Phosphothreonine is present on T303. A Phosphoserine modification is found at S345. Phosphothreonine occurs at positions 348 and 350. The segment covering 359–373 has biased composition (low complexity); the sequence is SSSSTSAAMPHSSSA. Phosphoserine is present on residues S380, S398, S406, and S409. T411 is modified (phosphothreonine). A phosphoserine mark is found at S415, S425, S429, and S432. A compositionally biased stretch (low complexity) spans 422–432; it reads SSGSRSSSLKS. Residue T436 is modified to Phosphothreonine. Over residues 442–478 the composition is skewed to polar residues; that stretch reads QLQSIRSEGTTSTSYKSLANQTRNGSLSYDSLLTPSD. S529 carries the phosphoserine modification. A Phosphotyrosine; by FYN modification is found at Y533. At S554 the chain carries Phosphoserine. At R617 the chain carries Omega-N-methylarginine. The residue at position 621 (S621) is a Phosphoserine. Position 659 is a phosphothreonine (T659). Polar residues predominate over residues 666–677; the sequence is LKTTYSKSNGQP. 2 positions are modified to phosphoserine: S684 and S694. R697 is modified (omega-N-methylarginine).

It belongs to the DHHC palmitoyltransferase family. ERF2/ZDHHC9 subfamily. Phosphorylation regulates association with endocytic proteins and its subcellular localization. Phosphorylation by LYN during fatty acid uptake leads to inactivation of the activity. Post-translationally, autopalmitoylated. Palmitoylation of the C-terminal tail regulates stimulation-dependent plasma membrane motility.

It is found in the cell membrane. The protein localises to the synapse. The enzyme catalyses L-cysteinyl-[protein] + hexadecanoyl-CoA = S-hexadecanoyl-L-cysteinyl-[protein] + CoA. In terms of biological role, palmitoyltransferase that catalyzes the addition of palmitate onto various protein substrates such as CTNND2, CD36, GSDMD, NLRP3, NOD1, NOD2, STAT3 and S1PR1 thus plays a role in various biological processes including cell adhesion, inflammation, fatty acid uptake, bacterial sensing or cardiac functions. Plays an important role in the regulation of synapse efficacy by mediating palmitoylation of delta-catenin/CTNND2, thereby increasing synaptic delivery and surface stabilization of alpha-amino-3-hydroxy-5-methyl-4-isoxazole propionic acid receptors (AMPARs). Under basal conditions, remains at the synaptic membrane through FYN-mediated phosphorylation that prevents association with endocytic proteins. Neuronal activity enhances the internalization and trafficking of DHHC5 from spines to dendritic shafts where it palmitoylates delta-catenin/CTNND2. Regulates cell adhesion at the plasma membrane by palmitoylating GOLGA7B and DSG2. Plays a role in innate immune response by mediating the palmitoylation of NOD1 and NOD2 and their proper recruitment to the bacterial entry site and phagosomes. Also participates in fatty acid uptake by palmitoylating CD36 and thereby targeting it to the plasma membrane. Upon binding of fatty acids to CD36, gets phosphorylated by LYN leading to inactivation and subsequent CD36 caveolar endocytosis. Controls oligodendrocyte development by catalyzing STAT3 palmitoylation. Acts as a regulator of inflammatory response by mediating palmitoylation of NLRP3 and GSDMD. Palmitoylates NLRP3 to promote inflammasome assembly and activation. Activates pyroptosis by catalyzing palmitoylation of gasdermin-D (GSDMD), thereby promoting membrane translocation and pore formation of GSDMD. This chain is Palmitoyltransferase ZDHHC5, found in Homo sapiens (Human).